The chain runs to 80 residues: U-Asilidin(1)-Dg12 (80 aa).

The first 24 residues, 1-24 (MARLLVVSVGVFLAVIMLSSETMS), serve as a signal peptide directing secretion. The propeptide occupies 25 to 46 (LPAGENLPALTLFEAQNQLIGL). 3 disulfides stabilise this stretch: Cys-53–Cys-67, Cys-60–Cys-71, and Cys-66–Cys-78.

The protein belongs to the asilidin-1 family. In terms of tissue distribution, expressed by the venom gland.

The protein resides in the secreted. Its function is as follows. Neurotoxin that may modulate ions channels (other than those tested). In vivo, induces neurotoxic effects when injected into insects (tested on L.cuprina and A.domesticus). The polypeptide is U-Asilidin(1)-Dg12 (Dolopus genitalis (Giant Australian assassin fly)).